The chain runs to 20 residues: Non-specific lipid-transfer protein (20 aa).

This sequence belongs to the plant LTP family. As to expression, leaf.

In terms of biological role, plant non-specific lipid-transfer proteins transfer phospholipids as well as galactolipids across membranes. May play a role in wax or cutin deposition in the cell walls of expanding epidermal cells and certain secretory tissues. This is Non-specific lipid-transfer protein from Cannabis sativa (Hemp).